Consider the following 74-residue polypeptide: Serine rich endogenous peptide 23 (74 aa).

A signal peptide spans 1–25; that stretch reads MNKVVVYVLALSILLFFGLPNTTLA. The short motif at 52 to 66 is the SCOOP motif element; that stretch reads KIAVGGSDSVRAHSK. The SxS motif essential for MIK2 binding motif lies at 58–60; the sequence is SDS.

This sequence belongs to the serine rich endogenous peptide (SCOOP) phytocytokine family. As to quaternary structure, interacts with MIK2 (via extracellular leucine-rich repeat domain); this interaction triggers the formation of complex between MIK2 and the BAK1/SERK3 and SERK4 coreceptors, and subsequent BAK1 activation by phosphorylation. In terms of tissue distribution, mostly expressed in roots, and, to a lower extent, in seedlings shoots.

It is found in the cell membrane. The protein localises to the secreted. It localises to the extracellular space. The protein resides in the apoplast. Functionally, brassicaceae-specific phytocytokine (plant endogenous peptide released into the apoplast) perceived by MIK2 in a BAK1/SERK3 and SERK4 coreceptors-dependent manner, that modulates various physiological and antimicrobial processes including growth prevention and reactive oxygen species (ROS) response regulation. Inhibits root growth. This chain is Serine rich endogenous peptide 23, found in Arabidopsis thaliana (Mouse-ear cress).